The sequence spans 526 residues: Bifunctional purine biosynthesis protein PurH (526 aa).

Residues 1–147 enclose the MGS-like domain; the sequence is MTKIERALIS…KNWAHVAIVT (147 aa).

It belongs to the PurH family.

It catalyses the reaction (6R)-10-formyltetrahydrofolate + 5-amino-1-(5-phospho-beta-D-ribosyl)imidazole-4-carboxamide = 5-formamido-1-(5-phospho-D-ribosyl)imidazole-4-carboxamide + (6S)-5,6,7,8-tetrahydrofolate. The enzyme catalyses IMP + H2O = 5-formamido-1-(5-phospho-D-ribosyl)imidazole-4-carboxamide. It functions in the pathway purine metabolism; IMP biosynthesis via de novo pathway; 5-formamido-1-(5-phospho-D-ribosyl)imidazole-4-carboxamide from 5-amino-1-(5-phospho-D-ribosyl)imidazole-4-carboxamide (10-formyl THF route): step 1/1. The protein operates within purine metabolism; IMP biosynthesis via de novo pathway; IMP from 5-formamido-1-(5-phospho-D-ribosyl)imidazole-4-carboxamide: step 1/1. The polypeptide is Bifunctional purine biosynthesis protein PurH (Laribacter hongkongensis (strain HLHK9)).